Consider the following 210-residue polypeptide: 3-hexulose-6-phosphate synthase (210 aa).

It belongs to the HPS/KGPDC family. HPS subfamily.

The catalysed reaction is D-ribulose 5-phosphate + formaldehyde = D-arabino-hex-3-ulose 6-phosphate. It functions in the pathway one-carbon metabolism; formaldehyde assimilation via RuMP pathway; D-fructose 6-phosphate from D-ribulose 5-phosphate and formaldehyde: step 1/2. In terms of biological role, catalyzes the condensation of ribulose 5-phosphate with formaldehyde to form 3-hexulose 6-phosphate. The chain is 3-hexulose-6-phosphate synthase from Staphylococcus aureus (strain USA300).